The primary structure comprises 340 residues: S-adenosylmethionine:tRNA ribosyltransferase-isomerase (340 aa).

Belongs to the QueA family. In terms of assembly, monomer.

Its subcellular location is the cytoplasm. It catalyses the reaction 7-aminomethyl-7-carbaguanosine(34) in tRNA + S-adenosyl-L-methionine = epoxyqueuosine(34) in tRNA + adenine + L-methionine + 2 H(+). Its pathway is tRNA modification; tRNA-queuosine biosynthesis. In terms of biological role, transfers and isomerizes the ribose moiety from AdoMet to the 7-aminomethyl group of 7-deazaguanine (preQ1-tRNA) to give epoxyqueuosine (oQ-tRNA). This chain is S-adenosylmethionine:tRNA ribosyltransferase-isomerase, found in Vesicomyosocius okutanii subsp. Calyptogena okutanii (strain HA).